We begin with the raw amino-acid sequence, 524 residues long: Nickel-binding periplasmic protein (524 aa).

The signal sequence occupies residues 1–22 (MLSTLRRTLFALLACASFIVHA).

Belongs to the bacterial solute-binding protein 5 family.

The protein resides in the periplasm. Functionally, involved in a nickel transport system, probably represents the nickel binder. This Escherichia coli (strain K12) protein is Nickel-binding periplasmic protein (nikA).